Here is a 767-residue protein sequence, read N- to C-terminus: Syn-copalyl diphosphate synthase, chloroplastic (767 aa).

The N-terminal 47 residues, 1-47, are a transit peptide targeting the chloroplast; the sequence is MPVFTASFQCVTLFGQPASAADAQPLLQGQRPFLHLHARRRRPCGPM. Residues 45–74 are disordered; sequence GPMLISKSPPYPASEETREWEADGQHEHTD. Residues 59–74 are compositionally biased toward basic and acidic residues; that stretch reads EETREWEADGQHEHTD. Residue lysine 233 participates in substrate binding. Positions 365 and 367 each coordinate Mg(2+). The DXDD motif motif lies at 365-368; the sequence is DIDD. A substrate-binding site is contributed by lysine 453.

Belongs to the terpene synthase family. Mg(2+) serves as cofactor.

It is found in the plastid. It localises to the chloroplast. It carries out the reaction (2E,6E,10E)-geranylgeranyl diphosphate = 9alpha-copalyl diphosphate. Functionally, catalyzes the conversion of geranylgeranyl diphosphate to the phytoalexin precursor syn-copalyl diphosphate. Required for the biosynthesis of momilactones that exude from roots and act as allelochemicals against lowland weeds in paddy soil. The polypeptide is Syn-copalyl diphosphate synthase, chloroplastic (Oryza sativa subsp. japonica (Rice)).